A 126-amino-acid polypeptide reads, in one-letter code: Small ribosomal subunit protein bS6 (126 aa).

The segment at 104-126 (LARRDRGDRPERPREDFGAQAQA) is disordered. The segment covering 105–120 (ARRDRGDRPERPREDF) has biased composition (basic and acidic residues).

Belongs to the bacterial ribosomal protein bS6 family.

In terms of biological role, binds together with bS18 to 16S ribosomal RNA. The polypeptide is Small ribosomal subunit protein bS6 (Caulobacter vibrioides (strain ATCC 19089 / CIP 103742 / CB 15) (Caulobacter crescentus)).